Reading from the N-terminus, the 419-residue chain is UDP-N-acetylglucosamine 1-carboxyvinyltransferase (419 aa).

22 to 23 is a phosphoenolpyruvate binding site; sequence KN. A UDP-N-acetyl-alpha-D-glucosamine-binding site is contributed by Arg-91. Cys-115 serves as the catalytic Proton donor. Cys-115 carries the post-translational modification 2-(S-cysteinyl)pyruvic acid O-phosphothioketal. Residues 120-124, 160-163, Asp-305, and Ile-327 each bind UDP-N-acetyl-alpha-D-glucosamine; these read RPVDL and KVSV.

Belongs to the EPSP synthase family. MurA subfamily.

The protein localises to the cytoplasm. It catalyses the reaction phosphoenolpyruvate + UDP-N-acetyl-alpha-D-glucosamine = UDP-N-acetyl-3-O-(1-carboxyvinyl)-alpha-D-glucosamine + phosphate. It functions in the pathway cell wall biogenesis; peptidoglycan biosynthesis. In terms of biological role, cell wall formation. Adds enolpyruvyl to UDP-N-acetylglucosamine. In Sodalis glossinidius (strain morsitans), this protein is UDP-N-acetylglucosamine 1-carboxyvinyltransferase.